The following is a 633-amino-acid chain: ATP-dependent RNA helicase mss116, mitochondrial (633 aa).

A mitochondrion-targeting transit peptide spans 1 to 32 (MKTGRTRPLRVFDILVPPWPPTVPHRIKLPRG). The short motif at 38-66 (EFYSAITRNWNKLKGLKNCWQIWKDVQEI) is the Q motif element. Positions 70–248 (IRKYQGESTV…TAEKLSNIQT (179 aa)) constitute a Helicase ATP-binding domain. Residue 83-90 (PGNNDGAH) participates in ATP binding. Residues 195-198 (RPLE) carry the DEAD box motif. Residues 262–429 (FLADVKRILQ…NVDLVIQVGL (168 aa)) form the Helicase C-terminal domain. The interval 567–633 (FNYATGNDLN…GGRGGKPRAA (67 aa)) is disordered.

This sequence belongs to the DEAD box helicase family. DDX18/HAS1 subfamily.

The protein resides in the mitochondrion matrix. It carries out the reaction ATP + H2O = ADP + phosphate + H(+). Its function is as follows. ATP-dependent RNA helicase required for mitochondrial splicing of group I and II introns. Also required for efficient mitochondrial translation. The chain is ATP-dependent RNA helicase mss116, mitochondrial (mss116) from Aspergillus oryzae (strain ATCC 42149 / RIB 40) (Yellow koji mold).